Consider the following 526-residue polypeptide: Peptide chain release factor 3 (526 aa).

The 270-residue stretch at 8 to 277 (DKRRTFAIIS…GLTQWAPKPQ (270 aa)) folds into the tr-type G domain. GTP contacts are provided by residues 17–24 (SHPDAGKT), 85–89 (DTPGH), and 139–142 (NKLD).

Belongs to the TRAFAC class translation factor GTPase superfamily. Classic translation factor GTPase family. PrfC subfamily.

It localises to the cytoplasm. Functionally, increases the formation of ribosomal termination complexes and stimulates activities of RF-1 and RF-2. It binds guanine nucleotides and has strong preference for UGA stop codons. It may interact directly with the ribosome. The stimulation of RF-1 and RF-2 is significantly reduced by GTP and GDP, but not by GMP. This is Peptide chain release factor 3 from Actinobacillus succinogenes (strain ATCC 55618 / DSM 22257 / CCUG 43843 / 130Z).